A 590-amino-acid chain; its full sequence is Regulatory solute carrier protein family 1 member 1 (590 aa).

Disordered regions lie at residues 1 to 116 (MSSS…TQGL), 144 to 234 (EEGW…PDSE), 277 to 331 (SPSS…AEES), and 359 to 466 (EEVT…SHRT). Residues 16–35 (SSGQSPEAGNPTSLARSVSA) are compositionally biased toward polar residues. Low complexity predominate over residues 78–91 (SPCAAAAAPSSAMP). Polar residues predominate over residues 150–161 (ENQNPSQVNDLQ). Composition is skewed to basic and acidic residues over residues 162–179 (QHQE…RDAP) and 188–203 (PGER…REAT). Positions 313–331 (SSSSVCGSSQPPAESAEES) are enriched in low complexity. Residues 362–376 (TCQSEGTAWGQTRVN) show a composition bias toward polar residues. Basic and acidic residues-rich tracts occupy residues 380-395 (RWTE…DRPQ) and 404-420 (VKTE…RIED). Residues 451-465 (SVTVTSAETSNQSHR) are compositionally biased toward polar residues. The region spanning 544 to 584 (GFPAADIDRILRAGFTLQEALGALHRVGGNADLALLVLLAK) is the UBA domain.

As to quaternary structure, interacts with YRDC. In terms of tissue distribution, highly expressed in renal outer medulla, renal inner medulla, duodenum, ileum and jejunum. Moderately expressed in renal outer cortex, renal papilla, brain and liver.

It localises to the cell membrane. It is found in the nucleus. The protein localises to the golgi apparatus. The protein resides in the trans-Golgi network. Its function is as follows. Mediates transcriptional and post-transcriptional regulation of SLC5A1. Inhibits a dynamin and PKC-dependent exocytotic pathway of SLC5A1. Also involved in transcriptional regulation of SLC22A2. Exhibits glucose-dependent, short-term inhibition of SLC5A1 and SLC22A2 by inhibiting the release of vesicles from the trans-Golgi network. In Oryctolagus cuniculus (Rabbit), this protein is Regulatory solute carrier protein family 1 member 1 (RSC1A1).